The chain runs to 336 residues: Spore photoproduct lyase (336 aa).

The Radical SAM core domain maps to 74 to 305; it reads CKPSANYQLP…KFGQFGYGKY (232 aa). Cys-88, Cys-92, and Cys-95 together coordinate [4Fe-4S] cluster. Positions 215-232 form a DNA-binding region, H-T-H motif; that stretch reads ESAYNILNSGYKTGFIVG.

The protein belongs to the radical SAM superfamily. SPL family. Monomer or homodimer. Requires [4Fe-4S] cluster as cofactor. It depends on S-adenosyl-L-methionine as a cofactor.

The enzyme catalyses (5R)-5,6-dihydro-5-(thymidin-7-yl)thymidine in DNA = a thymidine dimer in DNA. Its function is as follows. Involved in repair of UV radiation-induced DNA damage during spore germination. Can repair thymine dimer 5-thyminyl-5,6-dihydrothymine (known as spore photoproduct (SP)) by in situ monomerization of SP to two thymines. The chain is Spore photoproduct lyase (splB) from Clostridium acetobutylicum (strain ATCC 824 / DSM 792 / JCM 1419 / IAM 19013 / LMG 5710 / NBRC 13948 / NRRL B-527 / VKM B-1787 / 2291 / W).